A 278-amino-acid chain; its full sequence is MPHRARDTVLEPPELRARREFPVAWAGAGPQHPGMIRKAPKSDAAPPAKGVIAVAPPSFRRERALLKRGIWPVAGCDEAGRGPLAGPVVAAAVVLDPKRIPKGLDDSKKLTAEKREALFEEICATASFAVAYASPARIERDNILRASLWALARAVQALPEPPKHVFVDGRDKIITPCDCDAVIGGDALVLSIAAASIIAKVARDRLMCRLAEDCPGYGFDHHKGYGVPEHLAALDRLGPTKHHRKLFAPVAAAWDKHAPGERETAAAPPDLFGLSASA.

Positions 71–259 (WPVAGCDEAG…VAAAWDKHAP (189 aa)) constitute an RNase H type-2 domain. 3 residues coordinate a divalent metal cation: D77, E78, and D168.

This sequence belongs to the RNase HII family. It depends on Mn(2+) as a cofactor. Requires Mg(2+) as cofactor.

It is found in the cytoplasm. It carries out the reaction Endonucleolytic cleavage to 5'-phosphomonoester.. Endonuclease that specifically degrades the RNA of RNA-DNA hybrids. The chain is Ribonuclease HII from Rhodopseudomonas palustris (strain BisA53).